Reading from the N-terminus, the 117-residue chain is Large ribosomal subunit protein bL20 (117 aa).

Belongs to the bacterial ribosomal protein bL20 family.

In terms of biological role, binds directly to 23S ribosomal RNA and is necessary for the in vitro assembly process of the 50S ribosomal subunit. It is not involved in the protein synthesizing functions of that subunit. The sequence is that of Large ribosomal subunit protein bL20 from Rickettsia massiliae (strain Mtu5).